Here is a 926-residue protein sequence, read N- to C-terminus: Disease resistance protein RPM1 (926 aa).

The leucine-zipper stretch occupies residues 10–45 (IGRILSVLENETLLLSGVHGEIDKMKKELLIMKSFL). The region spanning 153–467 (DAKWVNNISE…AQRFVEPIRG (315 aa)) is the NB-ARC domain. 200 to 207 (GMGGSGKT) serves as a coordination point for ATP. 11 LRR repeats span residues 561–580 (LHSL…LPSL), 581–603 (NLLR…LVTM), 605–625 (NLKY…NFHK), 626–649 (LVNL…MWKL), 686–707 (LQVM…CMTQ), 708–731 (LTRI…LNKI), 756–777 (TASI…WFNT), 778–804 (LQNL…TLPR), 825–836 (FQNLKILEIVQM), 837–859 (KHLT…YVRA), and 876–900 (LQEL…SVDR).

Belongs to the disease resistance NB-LRR family. As to quaternary structure, interacts directly with RIN4 via its N-terminal region. Interacts (via N-terminus) with RIN2 and RIN3 (via C-terminus). Interacts with TIP49A, a protein known to interact with the TATA binding protein complex (TBP). Binds to MORC1/CRT1. Interacts, via its NB-ARC domain, with RIN13.

The protein localises to the endomembrane system. The protein resides in the cell membrane. Disease resistance (R) protein that specifically recognizes the AvrRpm1 type III effector avirulence protein from Pseudomonas syringae. Resistance proteins guard the plant against pathogens that contain an appropriate avirulence protein via an indirect interaction with this avirulence protein. That triggers a defense system including the hypersensitive response (HR), which restricts the pathogen growth. Acts via its interaction with RIN4, and probably triggers the plant resistance when RIN4 is phosphorylated by AvrRpm1. It is then degraded at the onset of the hypersensitive response. This Arabidopsis thaliana (Mouse-ear cress) protein is Disease resistance protein RPM1.